Here is a 264-residue protein sequence, read N- to C-terminus: PDZ domain-containing protein 9 (264 aa).

A PDZ domain is found at 30-109; it reads QTKLTVGSLG…GTVLQIKVYR (80 aa).

The chain is PDZ domain-containing protein 9 (PDZD9) from Homo sapiens (Human).